The chain runs to 498 residues: PE-PGRS family protein PE_PGRS33 (498 aa).

The segment at 1-30 (MSFVVTIPEALAAVATDLAGIGSTIGTANA) is essential for translocation to the cell surface. The PE domain maps to 1 to 93 (MSFVVTIPEA…AGSYAAAEAA (93 aa)). Residues 140-260 (GNGGAGGSGA…GLFFGVGGAG (121 aa)) form an interacts with TLR2 region.

It belongs to the mycobacterial PE family. PGRS subfamily. In terms of assembly, interacts with human TLR2.

It is found in the secreted. The protein localises to the cell wall. It localises to the cell surface. The protein resides in the cell outer membrane. With respect to regulation, binding of Ca(2+) to PE_PGRS33 induces conformational changes and increases affinity for TLR2. Functionally, induces TNF-alpha release through human Toll-like receptor 2 (TLR2) signaling pathway, leading to macrophage apoptosis. The signaling pathway involves TLR2-dependent activation of the mitogen-activated protein kinase kinase kinase 5 (ASK1), which activates the p38 and JNK MAPKs, leading to enhanced expression of TNF-alpha and tumor necrosis factor receptor superfamily member 1A (TNFRI) genes. Signals are amplified through classical caspase 8-dependent mitochondrial release of cytochrome c, leading to the activation of caspases 9 and 3. Mediates Ca(2+)-dependent up-regulation of the anti-inflammatory cytokine IL-10. Mediates entry into macrophages in a TLR2-dependent mechanism and activates the TLR2-dependent pro-adhesive pathway. The protein is PE-PGRS family protein PE_PGRS33 of Mycobacterium tuberculosis (strain ATCC 25618 / H37Rv).